Here is a 278-residue protein sequence, read N- to C-terminus: Large ribosomal subunit protein uL2 (278 aa).

2 disordered regions span residues 1 to 58 and 225 to 278; these read MAIR…GGGH and VMNP…KNKR. Over residues 37–58 the composition is skewed to basic residues; that stretch reads LHGRGGRNAHGRITTRHKGGGH. The segment covering 253-267 has biased composition (basic and acidic residues); that stretch reads PEGRTRKNKASDKLI. Residues 268–278 show a composition bias toward basic residues; it reads VRRRRTGKNKR.

It belongs to the universal ribosomal protein uL2 family. As to quaternary structure, part of the 50S ribosomal subunit. Forms a bridge to the 30S subunit in the 70S ribosome.

Functionally, one of the primary rRNA binding proteins. Required for association of the 30S and 50S subunits to form the 70S ribosome, for tRNA binding and peptide bond formation. It has been suggested to have peptidyltransferase activity; this is somewhat controversial. Makes several contacts with the 16S rRNA in the 70S ribosome. This Rhodococcus opacus (strain B4) protein is Large ribosomal subunit protein uL2.